The chain runs to 338 residues: Glyceraldehyde-3-phosphate dehydrogenase, cytosolic (338 aa).

The tract at residues 2-153 (ADKKIKIGIN…YKSDLNIVSN (152 aa)) is binding to NAD. NAD(+) is bound by residues 15–16 (RI) and aspartate 37. The interval 56–75 (GQWKHNELKVKDEKTLLFGE) is external loop. An NAD(+)-binding site is contributed by arginine 84. The catalytic stretch occupies residues 154–338 (ASCTTNCLAP…VDLIIHMSKA (185 aa)). A D-glyceraldehyde 3-phosphate-binding site is contributed by 155 to 157 (SCT). Cysteine 156 functions as the Nucleophile in the catalytic mechanism. S-nitrosocysteine occurs at positions 156 and 160. Residues 183–206 (HSITATQKTVDGPSMKDWRGGRAA) are S-loop. D-glyceraldehyde 3-phosphate is bound by residues threonine 186, 215–216 (TG), and arginine 238. Position 320 (asparagine 320) interacts with NAD(+).

This sequence belongs to the glyceraldehyde-3-phosphate dehydrogenase family. In terms of assembly, homotetramer.

It is found in the cytoplasm. It carries out the reaction D-glyceraldehyde 3-phosphate + phosphate + NAD(+) = (2R)-3-phospho-glyceroyl phosphate + NADH + H(+). Its pathway is carbohydrate degradation; glycolysis; pyruvate from D-glyceraldehyde 3-phosphate: step 1/5. Key enzyme in glycolysis that catalyzes the first step of the pathway by converting D-glyceraldehyde 3-phosphate (G3P) into 3-phospho-D-glyceroyl phosphate. Essential for the maintenance of cellular ATP levels and carbohydrate metabolism. The polypeptide is Glyceraldehyde-3-phosphate dehydrogenase, cytosolic (GAPC) (Sinapis alba (White mustard)).